A 334-amino-acid polypeptide reads, in one-letter code: Galactosylgalactosylxylosylprotein 3-beta-glucuronosyltransferase 1 (334 aa).

Residues 1–6 (MPKRRD) lie on the Cytoplasmic side of the membrane. Positions 3–5 (KRR) are essential for transport from endoplasmic reticulum to Golgi apparatus and interaction with SAR1A. A helical; Signal-anchor for type II membrane protein membrane pass occupies residues 7–27 (ILAIVLIVLPWTLLITVWHQS). Topologically, residues 28 to 334 (TLAPLLAVHK…KGFTDPSVEI (307 aa)) are lumenal. A disordered region spans residues 37–56 (KDEGSDPRRETPPGADPREY). A UDP-alpha-D-glucuronate-binding site is contributed by 91 to 93 (PTY). A phosphothreonine mark is found at Thr103 and Thr108. UDP-alpha-D-glucuronate is bound at residue Asp122. The N-linked (GlcNAc...) asparagine glycan is linked to Asn140. 2 residues coordinate UDP-alpha-D-glucuronate: Arg165 and Arg170. An N-linked (GlcNAc...) asparagine glycan is attached at Asn184. 195–197 (DDD) contacts UDP-alpha-D-glucuronate. Asp197 is a Mn(2+) binding site. The tract at residues 245–254 (FDPHRPFAID) is interaction with galactose moiety of substrate glycoprotein. Catalysis depends on Glu284, which acts as the Proton donor/acceptor. A glycan (N-linked (GlcNAc...) asparagine) is linked at Asn303. 311-313 (HTR) provides a ligand contact to UDP-alpha-D-glucuronate.

This sequence belongs to the glycosyltransferase 43 family. As to quaternary structure, homodimer. Interacts with SAR1A. Requires Mn(2+) as cofactor. Post-translationally, the soluble form derives from the membrane form by proteolytic processing. As to expression, mainly expressed in the brain.

Its subcellular location is the golgi apparatus membrane. The protein resides in the secreted. It localises to the endoplasmic reticulum membrane. The catalysed reaction is 3-O-(beta-D-galactosyl-(1-&gt;3)-beta-D-galactosyl-(1-&gt;4)-beta-D-xylosyl)-L-seryl-[protein] + UDP-alpha-D-glucuronate = 3-O-(beta-D-GlcA-(1-&gt;3)-beta-D-Gal-(1-&gt;3)-beta-D-Gal-(1-&gt;4)-beta-D-Xyl)-L-seryl-[protein] + UDP + H(+). Its pathway is protein modification; protein glycosylation. Its function is as follows. Involved in the biosynthesis of L2/HNK-1 carbohydrate epitope on glycoproteins. Can also play a role in glycosaminoglycan biosynthesis. Substrates include asialo-orosomucoid (ASOR), asialo-fetuin, and asialo-neural cell adhesion molecule. Requires sphingomyelin for activity: stearoyl-sphingomyelin was the most effective, followed by palmitoyl-sphingomyelin and lignoceroyl-sphingomyelin. Activity was demonstrated only for sphingomyelin with a saturated fatty acid and not for that with an unsaturated fatty acid, regardless of the length of the acyl group. This chain is Galactosylgalactosylxylosylprotein 3-beta-glucuronosyltransferase 1, found in Homo sapiens (Human).